Reading from the N-terminus, the 120-residue chain is DLWQFGQMILKETGKLPFPYYTYGGCYCGVGGRRGLGTKDDRCCYVHDCCYKKLTGCPKTDDRYSYSWLDLTIVCGEDDPCKELCECDKAIAVCFRENLGTYNKKYRYHLKPCKKADKPC.

7 disulfide bridges follow: cysteine 26–cysteine 113, cysteine 28–cysteine 44, cysteine 43–cysteine 94, cysteine 49–cysteine 120, cysteine 50–cysteine 87, cysteine 57–cysteine 81, and cysteine 75–cysteine 85. Residues 104–115 (KKYRYHLKPCKK) are important for membrane-damaging activities in eukaryotes and bacteria; heparin-binding.

This sequence belongs to the phospholipase A2 family. Group II subfamily. D49 sub-subfamily. In terms of assembly, homodimer; non-covalently linked (probable alternative/compact dimer conformation). As to expression, expressed by the venom gland.

It is found in the secreted. Snake venom phospholipase A2 (PLA2) that lacks enzymatic activity. Shows high myotoxin activities. Also has anticoagulant activity. A model of myotoxic mechanism has been proposed: an apo Lys49-PLA2 is activated by the entrance of a hydrophobic molecule (e.g. fatty acid) at the hydrophobic channel of the protein leading to a reorientation of a monomer. This reorientation causes a transition between 'inactive' to 'active' states, causing alignment of C-terminal and membrane-docking sites (MDoS) side-by-side and putting the membrane-disruption sites (MDiS) in the same plane, exposed to solvent and in a symmetric position for both monomers. The MDoS region stabilizes the toxin on membrane by the interaction of charged residues with phospholipid head groups. Subsequently, the MDiS region destabilizes the membrane with penetration of hydrophobic residues. This insertion causes a disorganization of the membrane, allowing an uncontrolled influx of ions (i.e. calcium and sodium), and eventually triggering irreversible intracellular alterations and cell death. In Bothrops pirajai (Piraja's lancehead), this protein is Basic phospholipase A2 homolog piratoxin-3.